The chain runs to 152 residues: Transcriptional regulator MraZ (152 aa).

SpoVT-AbrB domains are found at residues A5–E52 and A81–T124.

It belongs to the MraZ family. Forms oligomers.

The protein localises to the cytoplasm. The protein resides in the nucleoid. Its function is as follows. Negatively regulates its own expression and that of the subsequent genes in the proximal part of the division and cell wall (dcw) gene cluster. Acts by binding directly to DNA. May also regulate the expression of genes outside the dcw cluster. The polypeptide is Transcriptional regulator MraZ (Erwinia tasmaniensis (strain DSM 17950 / CFBP 7177 / CIP 109463 / NCPPB 4357 / Et1/99)).